Consider the following 119-residue polypeptide: Small ribosomal subunit protein bS6 (119 aa).

The protein belongs to the bacterial ribosomal protein bS6 family.

Its function is as follows. Binds together with bS18 to 16S ribosomal RNA. The sequence is that of Small ribosomal subunit protein bS6 from Buchnera aphidicola subsp. Baizongia pistaciae (strain Bp).